The primary structure comprises 125 residues: Cytochrome c-556 (125 aa).

Heme contacts are provided by M13, C113, C116, and H117. The heme c site is built by M13, C113, C116, and H117.

In terms of assembly, monomer. Binds 1 heme c group covalently per subunit.

In terms of biological role, low-spin monoheme cytochrome c. This is Cytochrome c-556 from Agrobacterium tumefaciens (strain apple 185).